The primary structure comprises 823 residues: Protein Jade-3 (823 aa).

Residues 1 to 40 (MKRHRPVSSSESSDECPSTSFTSSSMYRKKSKNPKEQKKS) form a disordered region. Residues 8–20 (SSSESSDECPSTS) show a composition bias toward low complexity. N6-acetyllysine occurs at positions 30, 32, and 35. A PHD-type 1 zinc finger spans residues 200–250 (DVICDVCRSPDSEEGNDMVFCDKCNVCVHQACYGILKIPEGSWLCRSCVLG). The segment at 252-286 (YPQCVLCPKKGGAMKTTRTGTKWAHVSCALWIPEV) adopts a C2HC pre-PHD-type zinc-finger fold. The PHD-type 2 zinc-finger motif lies at 310 to 366 (LVCNLCKLKTGACIQCSVKSCITAFHVTCAFEHGLEMKTILDEGDEVKFKSFCLKHS). 2 disordered regions span residues 543 to 585 (LKMP…PEEP) and 601 to 631 (KSNC…AEFY). Residues 549–562 (TSEDCKDSSTETEH) show a composition bias toward basic and acidic residues. Phosphoserine is present on residues serine 566 and serine 578. Lysine 601 is subject to N6-acetyllysine. Serine 608 is modified (phosphoserine). Lysine 638 carries the post-translational modification N6-acetyllysine. A disordered region spans residues 651-676 (SIGNGKNQPNSRVSSSNGLEGNWSGN). At lysine 735 the chain carries N6-acetyllysine. The interval 756 to 823 (TGRASYQETD…HPHSHSSMQR (68 aa)) is disordered. A phosphoserine mark is found at serine 774 and serine 776. Over residues 781–809 (EGSKETPRVKRESSDRENPSHDSARECHG) the composition is skewed to basic and acidic residues.

The protein belongs to the JADE family. In terms of assembly, component of the HBO1 complex composed at least of ING4 or ING5, MYST2/HBO1, MEAF6, and one of JADE1, JADE2 and JADE3.

Functionally, scaffold subunit of some HBO1 complexes, which have a histone H4 acetyltransferase activity. This chain is Protein Jade-3 (Jade3), found in Mus musculus (Mouse).